Here is a 361-residue protein sequence, read N- to C-terminus: NAD(P)H-quinone oxidoreductase subunit 1, chloroplastic (361 aa).

6 helical membrane-spanning segments follow: residues Ile-25 to Ile-45, Val-102 to Leu-122, Leu-125 to Met-145, Tyr-246 to Ser-266, Val-298 to Ile-318, and Leu-334 to Thr-354.

Belongs to the complex I subunit 1 family. NDH is composed of at least 16 different subunits, 5 of which are encoded in the nucleus.

It is found in the plastid. Its subcellular location is the chloroplast thylakoid membrane. The enzyme catalyses a plastoquinone + NADH + (n+1) H(+)(in) = a plastoquinol + NAD(+) + n H(+)(out). The catalysed reaction is a plastoquinone + NADPH + (n+1) H(+)(in) = a plastoquinol + NADP(+) + n H(+)(out). Functionally, NDH shuttles electrons from NAD(P)H:plastoquinone, via FMN and iron-sulfur (Fe-S) centers, to quinones in the photosynthetic chain and possibly in a chloroplast respiratory chain. The immediate electron acceptor for the enzyme in this species is believed to be plastoquinone. Couples the redox reaction to proton translocation, and thus conserves the redox energy in a proton gradient. The polypeptide is NAD(P)H-quinone oxidoreductase subunit 1, chloroplastic (Nymphaea alba (White water-lily)).